The primary structure comprises 716 residues: Ciliary WD repeat-containing protein ctxp80 (716 aa).

A disordered region spans residues 1–53 (MGCGGSSGASDPSSEKINWNNAEIHDEFKQEQKKAGAKRKAFDKTTGKAVEKE). Positions 8–21 (GASDPSSEKINWNN) are enriched in polar residues. Basic and acidic residues predominate over residues 23–53 (EIHDEFKQEQKKAGAKRKAFDKTTGKAVEKE). 10 WD repeats span residues 167-208 (YHTN…KKGR), 213-254 (KGGR…QVKK), 257-297 (SGPD…FKKK), 305-343 (GKPT…STYD), 345-382 (HGKG…AEKT), 424-462 (HSDG…STAL), 529-568 (DSGE…KLGT), 571-610 (AHNS…QDPS), 639-678 (TDGT…GATP), and 683-715 (GHSE…QWKK).

The protein belongs to the WD repeat EMAP family.

The sequence is that of Ciliary WD repeat-containing protein ctxp80 from Euplotoides octocarinatus (Freshwater ciliate).